The primary structure comprises 709 residues: Fatty acid oxidation complex subunit alpha (709 aa).

Residues 1 to 188 (MEKTFNLTRR…KMGLVNDVVP (188 aa)) form an enoyl-CoA hydratase region. A 3-hydroxyacyl-CoA dehydrogenase region spans residues 308–709 (RKVKKAVILG…EMAAEKTRFF (402 aa)).

In the N-terminal section; belongs to the enoyl-CoA hydratase/isomerase family. It in the central section; belongs to the 3-hydroxyacyl-CoA dehydrogenase family. In terms of assembly, heterotetramer of two alpha chains (FadJ) and two beta chains (FadI).

It localises to the cytoplasm. It carries out the reaction a (3S)-3-hydroxyacyl-CoA = a (2E)-enoyl-CoA + H2O. The enzyme catalyses a 4-saturated-(3S)-3-hydroxyacyl-CoA = a (3E)-enoyl-CoA + H2O. It catalyses the reaction a (3S)-3-hydroxyacyl-CoA + NAD(+) = a 3-oxoacyl-CoA + NADH + H(+). The catalysed reaction is (3S)-3-hydroxybutanoyl-CoA = (3R)-3-hydroxybutanoyl-CoA. The protein operates within lipid metabolism; fatty acid beta-oxidation. Functionally, catalyzes the formation of a hydroxyacyl-CoA by addition of water on enoyl-CoA. Also exhibits 3-hydroxyacyl-CoA epimerase and 3-hydroxyacyl-CoA dehydrogenase activities. In Shewanella sp. (strain MR-4), this protein is Fatty acid oxidation complex subunit alpha.